Consider the following 494-residue polypeptide: Glutamate decarboxylase 2 (494 aa).

Lys276 bears the N6-(pyridoxal phosphate)lysine mark. The tract at residues 463 to 494 (VKEKKMEKEILMEVIVGWRKFVKERKKMNGVC) is calmodulin-binding.

It belongs to the group II decarboxylase family. As to quaternary structure, homohexamer. Interacts with calmodulin. It depends on pyridoxal 5'-phosphate as a cofactor. Expressed in roots, inflorescence stems, flowers, siliques and leaves.

The catalysed reaction is L-glutamate + H(+) = 4-aminobutanoate + CO2. Up-regulated by calmodulin binding at physiological pH. In terms of biological role, catalyzes the conversion of glutamate to 4-aminobutanoate (GABA). The calmodulin-binding is calcium-dependent and it is proposed to directly or indirectly form a calcium regulated control of GABA biosynthesis. The protein is Glutamate decarboxylase 2 (GAD2) of Arabidopsis thaliana (Mouse-ear cress).